Here is a 237-residue protein sequence, read N- to C-terminus: Class B acid phosphatase (237 aa).

The signal sequence occupies residues 1–23 (MRKTPLALSAVFLLLSLNQSAFA). The active-site Nucleophile is D69. D69 and D71 together coordinate Mg(2+). D71 (proton donor) is an active-site residue. Substrate contacts are provided by residues 137-138 (TG) and K177. D192 provides a ligand contact to Mg(2+).

The protein belongs to the class B bacterial acid phosphatase family. As to quaternary structure, homotetramer. Requires Mg(2+) as cofactor.

It localises to the periplasm. The enzyme catalyses a phosphate monoester + H2O = an alcohol + phosphate. Functionally, dephosphorylates several organic phosphate monoesters. Also has a phosphotransferase activity catalyzing the transfer of low-energy phosphate groups from organic phosphate monoesters to free hydroxyl groups of various organic compounds. The protein is Class B acid phosphatase of Rahnella sp. (strain Y9602).